Here is a 617-residue protein sequence, read N- to C-terminus: Guanylate cyclase soluble subunit beta-2 (617 aa).

His26 is a binding site for heme. The region spanning 391–519 is the Guanylate cyclase domain; that stretch reads TILFSDVVTF…DTVNTASRME (129 aa). A compositionally biased stretch (basic and acidic residues) spans 577–586; it reads RSKTPVDHKG. The segment at 577–605 is disordered; that stretch reads RSKTPVDHKGSTQKASLPTTKLQGSVQPS. Positions 588 to 604 are enriched in polar residues; sequence TQKASLPTTKLQGSVQP.

The protein belongs to the adenylyl cyclase class-4/guanylyl cyclase family. As to quaternary structure, heterodimer of an alpha and a beta chain. Requires heme as cofactor. Expressed in gastric signet ring cell carcinoma, but not in the normal stomach.

It localises to the cytoplasm. The enzyme catalyses GTP = 3',5'-cyclic GMP + diphosphate. Activated by nitric oxide in the presence of magnesium or manganese ions. This Homo sapiens (Human) protein is Guanylate cyclase soluble subunit beta-2 (GUCY1B2).